Reading from the N-terminus, the 308-residue chain is Aspartate carbamoyltransferase catalytic subunit (308 aa).

Positions 57 and 58 each coordinate carbamoyl phosphate. Position 86 (Lys86) interacts with L-aspartate. Carbamoyl phosphate contacts are provided by Arg107, His135, and Gln138. L-aspartate contacts are provided by Arg167 and Arg228. Carbamoyl phosphate is bound by residues Leu267 and Pro268.

It belongs to the aspartate/ornithine carbamoyltransferase superfamily. ATCase family. In terms of assembly, heterooligomer of catalytic and regulatory chains.

It catalyses the reaction carbamoyl phosphate + L-aspartate = N-carbamoyl-L-aspartate + phosphate + H(+). It functions in the pathway pyrimidine metabolism; UMP biosynthesis via de novo pathway; (S)-dihydroorotate from bicarbonate: step 2/3. Catalyzes the condensation of carbamoyl phosphate and aspartate to form carbamoyl aspartate and inorganic phosphate, the committed step in the de novo pyrimidine nucleotide biosynthesis pathway. This chain is Aspartate carbamoyltransferase catalytic subunit, found in Methanococcoides burtonii (strain DSM 6242 / NBRC 107633 / OCM 468 / ACE-M).